Here is a 194-residue protein sequence, read N- to C-terminus: Fe/S biogenesis protein NfuA (194 aa).

The [4Fe-4S] cluster site is built by Cys151 and Cys154.

This sequence belongs to the NfuA family. As to quaternary structure, homodimer. [4Fe-4S] cluster is required as a cofactor.

Its function is as follows. Involved in iron-sulfur cluster biogenesis. Binds a 4Fe-4S cluster, can transfer this cluster to apoproteins, and thereby intervenes in the maturation of Fe/S proteins. Could also act as a scaffold/chaperone for damaged Fe/S proteins. In Photobacterium profundum (strain SS9), this protein is Fe/S biogenesis protein NfuA.